A 2176-amino-acid chain; its full sequence is Protein eyes shut (2176 aa).

Residues 1 to 122 (MSNVHQFDTQ…NPNILLPTLR (122 aa)) are Cytoplasmic-facing. Residues 123-143 (ILARGLLLPALILAILVGSSQ) traverse the membrane as a helical segment. An EGF-like 1 domain is found at 144–180 (AGFACLSNPCVFGVCIDGLNSSYSCYCIDGYTGIQCQ). The Extracellular portion of the chain corresponds to 144–2176 (AGFACLSNPC…DLHGDEPLTV (2033 aa)). Intrachain disulfides connect Cys-148-Cys-158, Cys-153-Cys-168, Cys-170-Cys-179, Cys-186-Cys-197, Cys-191-Cys-206, Cys-208-Cys-217, Cys-224-Cys-235, Cys-229-Cys-244, Cys-246-Cys-255, Cys-262-Cys-276, Cys-270-Cys-286, Cys-288-Cys-297, Cys-304-Cys-315, Cys-309-Cys-324, Cys-326-Cys-335, Cys-342-Cys-353, Cys-347-Cys-362, Cys-364-Cys-373, Cys-380-Cys-392, Cys-386-Cys-401, and Cys-403-Cys-412. A glycan (N-linked (GlcNAc...) asparagine) is linked at Asn-163. An EGF-like 2; calcium-binding domain is found at 182–218 (NWDECWSSPCQNGGTCVDGVAYYNCTCPEGFSGSNCE). N-linked (GlcNAc...) asparagine glycosylation occurs at Asn-205. Residues 220–256 (NVDECMSNPCQNGGLCRDRTNGYICTCQPGYLGSHCE) form the EGF-like 3; calcium-binding domain. Residues 258 to 298 (DVAVCETGTGARCQHGGECIEGPGLEFTCDCPAGWHGRICQ) enclose the EGF-like 4 domain. An EGF-like 5; calcium-binding domain is found at 300-336 (EINECASSPCQNGGVCVDKLAAYACACPMGYTGINCE). The EGF-like 6 domain occupies 338-374 (EILICADNPCQNNALCLMEEGVPTCYCVPDYHGEKCE). Residues 376–413 (QYDECQLGPRCMNGGVCIDGVDTFSCSCPPLLTGMLCE) form the EGF-like 7; calcium-binding domain. Residue Asn-425 is glycosylated (N-linked (GlcNAc...) asparagine). 2 stretches are compositionally biased toward low complexity: residues 429–447 (PATQSPPRRTTTTSTMAPP) and 482–502 (VTSVLSPSSSSSSSEEGVSVE). Disordered regions lie at residues 429-465 (PATQSPPRRTTTTSTMAPPTVRPVTPPETTVSPSRAS), 482-639 (VTSV…RPTA), 757-783 (RFTTVQPPAGVTTTSPTEDSSVELPTP), 802-854 (LITT…VEIT), and 902-1014 (APPA…GVPE). A compositionally biased stretch (polar residues) spans 514–526 (GSHSISVEQTTAV). Positions 548-560 (SASESETETEEEI) are enriched in acidic residues. Low complexity-rich tracts occupy residues 564–582 (TTARPPTSRSSSSSEESPS) and 596–632 (TSASSESSGEVVTSEEYTTVPHFEVSGSKSESGSEEV). Over residues 757-775 (RFTTVQPPAGVTTTSPTED) the composition is skewed to polar residues. The span at 811–820 (THHHHHHHPH) shows a compositional bias: basic residues. 2 stretches are compositionally biased toward pro residues: residues 904-922 (PATPAPVPPATTTPPPSPP) and 930-955 (TLPPTLPPVTLPPVTQPPPTIPPTPP). An EGF-like 8 domain is found at 1018–1054 (GDVDCIKLGCYNGGTCVTTSEGSRCVCRFDRQGPLCE). 3 disulfide bridges follow: Cys-1022-Cys-1033, Cys-1027-Cys-1042, and Cys-1044-Cys-1053. The region spanning 1059-1266 (IRNAAFSGDS…GITECGSLAC (208 aa)) is the Laminin G-like 1 domain. N-linked (GlcNAc...) asparagine glycans are attached at residues Asn-1165, Asn-1170, and Asn-1176. An EGF-like 9 domain is found at 1309 to 1346 (EISVCEDNPCQYGGTCVQFPGSGYLCLCPLGKHGHYCE). 3 disulfide bridges follow: Cys-1313-Cys-1324, Cys-1318-Cys-1334, and Cys-1336-Cys-1345. The Laminin G-like 2 domain maps to 1353 to 1549 (LPSFSGSVNG…GVGQCGTREC (197 aa)). Asn-1471 carries an N-linked (GlcNAc...) asparagine glycan. 2 consecutive EGF-like domains span residues 1545–1581 (GTRECHRHACQHDGACLQHGATFTCICQEGWYGPLCA) and 1583–1621 (PTNPCDSFNNKCYEDATCVPLVNGYECDCPVGRTGKNCE). Disulfide bonds link Cys-1549-Cys-1560, Cys-1554-Cys-1569, Cys-1571-Cys-1580, Cys-1587-Cys-1600, Cys-1594-Cys-1609, and Cys-1611-Cys-1620. N-linked (GlcNAc...) asparagine glycosylation is found at Asn-1665 and Asn-1861. Positions 1692-1879 (EKQRSFSPVP…NIRDCDGTAC (188 aa)) constitute a Laminin G-like 3 domain. 2 consecutive EGF-like domains span residues 1875–1912 (DGTACGGDSCESGGHCWLDEKLQPHCICPEYAKGDRCE) and 1913–1946 (YSETCKLIPCKNNGRCLRSGRCSCPNGWGGFYCE). 6 cysteine pairs are disulfide-bonded: Cys-1879–Cys-1890, Cys-1884–Cys-1900, Cys-1902–Cys-1911, Cys-1917–Cys-1928, Cys-1922–Cys-1934, and Cys-1936–Cys-1945. Residues 1952 to 2166 (PTTPSFRGNS…TYQGENIGSC (215 aa)) form the Laminin G-like 4 domain. N-linked (GlcNAc...) asparagine glycosylation is found at Asn-1994, Asn-2035, and Asn-2099. The tract at residues 2080 to 2101 (GGRSLGSTTPRSTLAGRRKNSS) is disordered.

The protein belongs to the EYS family. In terms of tissue distribution, expressed from the beginning of rhabdomere biogenesis (48 hours after pupal formation), when it decorates the entire photoreceptor apical surface.

Its subcellular location is the membrane. It localises to the secreted. In terms of biological role, essential for the formation of matrix-filled interrhabdomeral space: critical for the formation of epithelial lumina in the retina. Acts together with prominin (prom) and the cell adhesion molecule chaoptin (chp) to choreograph the partitioning of rhabdomeres into an open system. The protein is Protein eyes shut of Drosophila melanogaster (Fruit fly).